The sequence spans 824 residues: Silver exporting P-type ATPase (824 aa).

A disordered region spans residues 89-112 (ASEHHHHHDHHEVSPDKIKQSHRQ). The segment covering 98 to 112 (HHEVSPDKIKQSHRQ) has biased composition (basic and acidic residues). The next 6 membrane-spanning stretches (helical) occupy residues 167–187 (FWLGLLLAFPVLILEMGSHLF), 200–220 (TWLQLLLASPVVLWCGWPFFA), 234–254 (FTLVAMGTGVAWVYSVIATVF), 268–288 (LVAIYFEAAAVITVLVLLGQV), 427–447 (WFVPLVILIAVVAFMIWSVWG), and 455–475 (GLIAAVSVLIIACPCALGLAT). The active-site 4-aspartylphosphate intermediate is D511. A run of 2 helical transmembrane segments spans residues 764 to 784 (IRQNLFFAFIYNALGVPVAAG) and 785 to 805 (LLYPVYGILLSPVIAAAAMAL).

This sequence belongs to the cation transport ATPase (P-type) (TC 3.A.3) family. Type IB subfamily.

It localises to the cell membrane. It catalyses the reaction Ag(+)(in) + ATP + H2O = Ag(+)(out) + ADP + phosphate + H(+). Component of the sil cation-efflux system that confers resistance to silver. The chain is Silver exporting P-type ATPase (silP) from Salmonella typhimurium.